A 349-amino-acid chain; its full sequence is Green-sensitive opsin-4 (349 aa).

Residues 1 to 36 (MNGTEGNNFYIPLSNRTGLARSPYEYPQYYLAEPWQ) lie on the Extracellular side of the membrane. 2 N-linked (GlcNAc...) asparagine glycosylation sites follow: Asn2 and Asn15. Residues 37 to 61 (FKLLAVYMFFLICLGFPINGLTLLV) form a helical membrane-spanning segment. The Cytoplasmic portion of the chain corresponds to 62–73 (TAQHKKLRQPLN). The chain crosses the membrane as a helical span at residues 74-99 (FILVNLAVAGTIMVCFGFTVTFYTAI). Residues 100 to 113 (NGYFVLGPTGCAIE) are Extracellular-facing. A disulfide bond links Cys110 and Cys187. A helical transmembrane segment spans residues 114–133 (GFMATLGGEVALWSLVVLAV). Residues 134–152 (ERYIVVCKPMGSFKFSASH) lie on the Cytoplasmic side of the membrane. The chain crosses the membrane as a helical span at residues 153 to 176 (AFAGCAFTWVMAMACAAPPLVGWS). Residues 177–202 (RYIPEGMQCSCGPDYYTLNPEYNNES) lie on the Extracellular side of the membrane. Residue Asn200 is glycosylated (N-linked (GlcNAc...) asparagine). A helical membrane pass occupies residues 203–230 (YVLYMFICHFILPVTIIFFTYGRLVCTV). The Cytoplasmic segment spans residues 231-252 (KAAAAQQQESESTQKAEREVTR). Residues 253 to 276 (MVILMVLGFLIAWTPYATVAAWIF) form a helical membrane-spanning segment. Residues 277 to 284 (FNKGAAFS) are Extracellular-facing. Residues 285 to 309 (AQFMAVPAFFSKTSALYNPVIYVLL) traverse the membrane as a helical segment. N6-(retinylidene)lysine is present on Lys296. Over 310-349 (NKQFRNCMLTTLFCGKNPLGDDESSTVSTSKTEVSSVSPA) the chain is Cytoplasmic. Residues 329–349 (GDDESSTVSTSKTEVSSVSPA) form a disordered region. Residues 334–349 (STVSTSKTEVSSVSPA) are compositionally biased toward low complexity.

It belongs to the G-protein coupled receptor 1 family. Opsin subfamily. In terms of processing, phosphorylated on some or all of the serine and threonine residues present in the C-terminal region. In terms of tissue distribution, retinal double cone accessory photoreceptor cell outer segments.

Its subcellular location is the membrane. Its function is as follows. Visual pigments are the light-absorbing molecules that mediate vision. They consist of an apoprotein, opsin, covalently linked to cis-retinal. This Danio rerio (Zebrafish) protein is Green-sensitive opsin-4 (opn1mw4).